The chain runs to 352 residues: UDP-N-acetylglucosamine--N-acetylmuramyl-(pentapeptide) pyrophosphoryl-undecaprenol N-acetylglucosamine transferase 3 (352 aa).

Residues 11–13, arginine 164, serine 194, and glutamine 289 contribute to the UDP-N-acetyl-alpha-D-glucosamine site; that span reads SAG.

It belongs to the glycosyltransferase 28 family. MurG subfamily.

It localises to the cell membrane. It catalyses the reaction di-trans,octa-cis-undecaprenyl diphospho-N-acetyl-alpha-D-muramoyl-L-alanyl-D-glutamyl-meso-2,6-diaminopimeloyl-D-alanyl-D-alanine + UDP-N-acetyl-alpha-D-glucosamine = di-trans,octa-cis-undecaprenyl diphospho-[N-acetyl-alpha-D-glucosaminyl-(1-&gt;4)]-N-acetyl-alpha-D-muramoyl-L-alanyl-D-glutamyl-meso-2,6-diaminopimeloyl-D-alanyl-D-alanine + UDP + H(+). The protein operates within cell wall biogenesis; peptidoglycan biosynthesis. Its function is as follows. Cell wall formation. Catalyzes the transfer of a GlcNAc subunit on undecaprenyl-pyrophosphoryl-MurNAc-pentapeptide (lipid intermediate I) to form undecaprenyl-pyrophosphoryl-MurNAc-(pentapeptide)GlcNAc (lipid intermediate II). This chain is UDP-N-acetylglucosamine--N-acetylmuramyl-(pentapeptide) pyrophosphoryl-undecaprenol N-acetylglucosamine transferase 3, found in Bacillus thuringiensis (strain Al Hakam).